Consider the following 90-residue polypeptide: Histone H1.M6.2 (90 aa).

Residues 1 to 90 form a disordered region; the sequence is MSDAAVPPKK…KAVKKAPKKK (90 aa). The span at 11–90 shows a compositional bias: basic residues; it reads ASPKKAAAKK…KAVKKAPKKK (80 aa).

It is found in the nucleus. Its subcellular location is the chromosome. The protein is Histone H1.M6.2 of Trypanosoma cruzi.